Here is a 352-residue protein sequence, read N- to C-terminus: RNA 3'-terminal phosphate cyclase (352 aa).

Residues Gln-102 and 292–296 (HMGDQ) each bind ATP. The active-site Tele-AMP-histidine intermediate is His-318.

Belongs to the RNA 3'-terminal cyclase family. Type 1 subfamily.

Its subcellular location is the cytoplasm. The enzyme catalyses a 3'-end 3'-phospho-ribonucleotide-RNA + ATP = a 3'-end 2',3'-cyclophospho-ribonucleotide-RNA + AMP + diphosphate. Its function is as follows. Catalyzes the conversion of 3'-phosphate to a 2',3'-cyclic phosphodiester at the end of RNA. The mechanism of action of the enzyme occurs in 3 steps: (A) adenylation of the enzyme by ATP; (B) transfer of adenylate to an RNA-N3'P to produce RNA-N3'PP5'A; (C) and attack of the adjacent 2'-hydroxyl on the 3'-phosphorus in the diester linkage to produce the cyclic end product. The biological role of this enzyme is unknown but it is likely to function in some aspects of cellular RNA processing. The sequence is that of RNA 3'-terminal phosphate cyclase from Methanopyrus kandleri (strain AV19 / DSM 6324 / JCM 9639 / NBRC 100938).